The sequence spans 422 residues: MYDFVIIGGGIIGMSTAMQLIDVYPDARIALLEKESGPACHQTGHNSGVIHAGVYYTPGSLKAQFCLAGNRATKAFCDQNGIRYDNCGKMLVATSELEMERMRALWERTAANGIEREWLNAEELREREPNITGLGGIFVPSSGIVSYREVTAAMAKIFQARGGEIIYNAEVSGLSEHKNGVVIRTRQGGEYEASTLISCSGLMADRLVKMLGLEPGFIICPFRGEYFRLAPEHNQIVNHLIYPIPDPAMPFLGVHLTRMIDGSVTVGPNAVLAFKREGYRKRDFSFSDTLEILGSSGIRRVLQNHLRSGLGEMKNSLCKSGYLRLVQKYCPRLSLSDLQPWPAGVRAQAVSPDGKLIDDFLFVTTPRTIHTCNAPSPAATSAIPIGAHIVSKVQTLLASQSNPGRTLRAARSVDALHAAFNQ.

The protein belongs to the L2HGDH family. The cofactor is FAD.

The protein resides in the cell inner membrane. The enzyme catalyses (S)-2-hydroxyglutarate + a quinone = a quinol + 2-oxoglutarate. Its pathway is amino-acid degradation. Functionally, catalyzes the dehydrogenation of L-2-hydroxyglutarate (L2HG) to alpha-ketoglutarate and couples to the respiratory chain by feeding electrons from the reaction into the membrane quinone pool. Functions in a L-lysine degradation pathway that proceeds via cadaverine, glutarate and L-2-hydroxyglutarate. Also displays some oxidase activity in vitro on L-2-hydroxyglutarate with O2 as the electron acceptor, but this activity is most likely not physiological. This Escherichia coli O17:K52:H18 (strain UMN026 / ExPEC) protein is L-2-hydroxyglutarate dehydrogenase.